We begin with the raw amino-acid sequence, 269 residues long: Basic leucine zipper 19 (269 aa).

In terms of domain architecture, bZIP spans 140 to 196 (DPKRVKRILANRQSAQRSRVRKLQYISELERSVTTLQMEVSALSPRVAFLDHQRSLL). The interval 142-161 (KRVKRILANRQSAQRSRVRK) is basic motif. Residues 168-196 (LERSVTTLQMEVSALSPRVAFLDHQRSLL) form a leucine-zipper region.

As to expression, expressed in roots and shoots.

It is found in the nucleus. Transcription regulator. The sequence is that of Basic leucine zipper 19 (BZIP19) from Oryza sativa subsp. japonica (Rice).